The chain runs to 238 residues: ATP synthase subunit a, chloroplastic (238 aa).

5 consecutive transmembrane segments (helical) span residues 27 to 47 (GQVL…SFLG), 86 to 106 (VPFL…GALL), 125 to 145 (INTT…AGIS), 190 to 210 (LVVG…IMLL), and 211 to 231 (GVFT…AYIN).

It belongs to the ATPase A chain family. F-type ATPases have 2 components, F(1) - the catalytic core - and F(0) - the membrane proton channel. F(1) has five subunits: alpha(3), beta(3), gamma(1), delta(1), epsilon(1). F(0) has four main subunits: a(1), b(1), b'(1) and c(10-14). The alpha and beta chains form an alternating ring which encloses part of the gamma chain. F(1) is attached to F(0) by a central stalk formed by the gamma and epsilon chains, while a peripheral stalk is formed by the delta, b and b' chains.

It is found in the plastid. It localises to the chloroplast thylakoid membrane. In terms of biological role, f(1)F(0) ATP synthase produces ATP from ADP in the presence of a proton or sodium gradient. F-type ATPases consist of two structural domains, F(1) containing the extramembraneous catalytic core and F(0) containing the membrane proton channel, linked together by a central stalk and a peripheral stalk. During catalysis, ATP synthesis in the catalytic domain of F(1) is coupled via a rotary mechanism of the central stalk subunits to proton translocation. This Chlamydomonas reinhardtii (Chlamydomonas smithii) protein is ATP synthase subunit a, chloroplastic.